A 580-amino-acid polypeptide reads, in one-letter code: Mucin-1 (580 aa).

Residues 1-22 form the signal peptide; that stretch reads MTPDIQAPFLSLLLLFPVLTVA. Residues 23 to 489 are Extracellular-facing; the sequence is NVPTLTTSDS…GSGVPGWGIA (467 aa). Polar residues predominate over residues 28–37; it reads TTSDSINPRR. The disordered stretch occupies residues 28 to 359; it reads TTSDSINPRR…SIALSTSSNP (332 aa). Residues 38–88 show a composition bias toward low complexity; sequence TTPVSTTQSSPTSSPTKETSWSTTTTLLTASSPAPSPAASPGHDGASTPTS. Repeat copies occupy residues 70–89, 90–109, 110–129, 130–149, 150–169, 170–189, 190–209, 210–229, 230–249, 250–269, and 270–289. Residues 70–289 form an 11 X 20 AA approximate tandem repeats of P-A-P-S-P-A-A-S-P-G-H-D-G-A-S-T-P-T-S-S region; that stretch reads PAPSPAASPG…QHGASSPTSS (220 aa). Residues S73, S77, and S84 are each glycosylated (O-linked (GalNAc...) serine). T85 and T87 each carry an O-linked (GalNAc...) threonine glycan. Residues S88 and S89 are each glycosylated (O-linked (GalNAc...) serine). Composition is skewed to low complexity over residues 96–108, 116–128, 136–148, 156–168, 176–188, 196–208, 216–228, 236–248, and 256–306; these read ASPG…TPTS, ASPG…SPTG, and ASPG…MVTS. N-linked (GlcNAc...) asparagine glycosylation occurs at N161. An N-linked (GlcNAc...) asparagine glycan is attached at N201. Residue N241 is glycosylated (N-linked (GlcNAc...) asparagine). A compositionally biased stretch (polar residues) spans 308–344; sequence HKGTSSRATMTPVSKGTPSSVPSSETAPTAASHITRT. The span at 345–357 shows a compositional bias: low complexity; sequence AASSPSIALSTSS. The SEA domain maps to 368–475; sequence RVSLYFLSFR…VSVYSAPFPS (108 aa). 2 N-linked (GlcNAc...) asparagine glycosylation sites follow: N384 and N460. A helical membrane pass occupies residues 490-510; that stretch reads LLVLVCVLVALAIIYLIALVV. 2 S-palmitoyl cysteine lipidation sites follow: C511 and C513. The Cytoplasmic segment spans residues 511–580; that stretch reads CQCGRKKCEQ…TNLAATSANL (70 aa). The interval 519–555 is interaction with P53; it reads EQLDVFPTLDAYHPMSEYSTYHTHGRYVPPGSTKRSP. Position 530 is a phosphotyrosine; by PDGFR (Y530). The Interaction with GRB2 motif lies at 530 to 533; the sequence is YHPM. Y539 bears the Phosphotyrosine mark. The interval 544–563 is disordered; it reads RYVPPGSTKRSPYEEVSAGN. Phosphotyrosine; by PDGFR is present on Y545. The tract at residues 550–557 is required for interaction with GSK3B; that stretch reads STKRSPYE. At T551 the chain carries Phosphothreonine; by PKC/PRKCD. S554 is subject to Phosphoserine; by GSK3-beta. A Phosphotyrosine; by CSK, EGFR and SRC modification is found at Y556. Positions 556–559 match the Interaction with SRC and ESR1 motif; that stretch reads YEEV. The tract at residues 560 to 568 is required for interaction with beta- and gamma-catenins; sequence SAGNGGSNL. Y570 bears the Phosphotyrosine mark. Residues 570–572 carry the Required for interaction with AP1S2 motif; it reads YTN.

As to quaternary structure, the alpha subunit forms a tight, non-covalent heterodimeric complex with the proteolytically-released beta subunit. Binds directly the SH2 domain of GRB2, and forms a MUC1/GRB2/SOS1 complex involved in RAS signaling. The cytoplasmic tail (MUC1CT) interacts with several proteins such as, SRC, CTNNB1 and ERBs. Interaction with the SH2 domain of CSK decreases interaction with GSK3B. Interacts with CTNNB1/beta-catenin and JUP/gamma-catenin and promotes cell adhesion. Interaction with JUP/gamma-catenin is induced by heregulin. Binds PRKCD, ERBB2, ERBB3 and ERBB4. Heregulin (HRG) stimulates the interaction with ERBB2 and, to a much lesser extent, the interaction with ERBB3 and ERBB4. Interacts with P53 in response to DNA damage. Interacts with KLF4. Interacts with estrogen receptor alpha/ESR1, through its DNA-binding domain, and stimulates its transcription activity. Binds ADAM17. In terms of processing, highly glycosylated (N- and O-linked carbohydrates and sialic acid). O-linked glycosylation consists mainly of GalNAc, galactose, and sialic acid. The ratio from pools of milk from different dairy breeds is GalNAc: GlcNAc:galactose:mannose:sialic acid is 14:1:10:1:15. Proteolytic cleavage in the SEA domain occurs in the endoplasmic reticulum by an autoproteolytic mechanism and requires the full-length SEA domain as well as requiring a Ser, Thr or Cys residue at the P + 1 site. Ectodomain shedding is mediated by ADAM17 in uterine epithelial cells. Post-translationally, dual palmitoylation on cysteine residues in the CQC motif is required for recycling from endosomes back to the plasma membrane. In terms of processing, phosphorylated on tyrosines and serine residues in the C-terminal. Phosphorylation on tyrosines in the C-terminal increases the nuclear location of MUC1 and beta-catenin. Phosphorylation by PKC delta induces binding of MUC1 to beta-catenin/CTNNB1 and thus decreases the formation of the beta-catenin/E-cadherin complex. Src-mediated phosphorylation inhibits interaction with GSK3B. Csk- or Src- or EGFR-mediated phosphorylation on Tyr-556 increases binding to beta-catenin/CTNNB1. GSK3B-mediated phosphorylation on Ser-554 decreases this interaction but restores the formation of the beta-cadherin/E-cadherin complex. On T-cell receptor activation, phosphorylated by LCK. PDGFR-mediated phosphorylation increases nuclear colocalization of MUC1CT and CTNNB1. In terms of tissue distribution, expressed on the apical surface of epithelia cells, and on the milk fat globule membrane (MGGM).

The protein resides in the apical cell membrane. It is found in the cell membrane. It localises to the cytoplasm. The protein localises to the nucleus. The alpha subunit has cell adhesive properties. May provide a protective layer on epithelial cells against bacterial and enzyme attack. Functionally, the beta subunit contains a C-terminal domain which is involved in cell signaling, through phosphorylations and protein-protein interactions. Modulates signaling in ERK, Src and NF-kappa-B pathways. In activated T-cells, influences directly or indirectly the Ras/MAPK pathway. Promotes tumor progression. Regulates P53-mediated transcription and determines cell fate in the genotoxic stress response. Binds, together with KLF4, the PE21 promoter element of P53 and represses P53 activity. This is Mucin-1 (MUC1) from Bos taurus (Bovine).